The chain runs to 1201 residues: Protein dduB (1201 aa).

An N-terminal signal peptide occupies residues 1-22; sequence MKFIKYLLILFLILKINYFVES. Residues 23-1180 lie on the Extracellular side of the membrane; sequence GVDCQKNTEY…QDPSDELSTS (1158 aa). Residues Asn68, Asn122, Asn150, Asn185, Asn283, Asn348, Asn360, Asn437, Asn448, Asn518, Asn535, Asn554, Asn585, Asn631, Asn759, Asn815, Asn830, Asn844, Asn946, Asn1042, Asn1058, Asn1098, and Asn1108 are each glycosylated (N-linked (GlcNAc...) asparagine). A helical transmembrane segment spans residues 1181–1201; sequence SFIQLNILSLLLISIFTIFIL.

Its subcellular location is the membrane. The polypeptide is Protein dduB (dduB) (Dictyostelium discoideum (Social amoeba)).